A 334-amino-acid polypeptide reads, in one-letter code: Galactinol synthase 3 (334 aa).

Lys97 is a catalytic residue. Residues Asp113, Asp115, and His251 each coordinate Mn(2+).

The protein belongs to the glycosyltransferase 8 family. Galactosyltransferase subfamily. It depends on a divalent metal cation as a cofactor.

The protein localises to the cytoplasm. The enzyme catalyses myo-inositol + UDP-alpha-D-galactose = alpha-D-galactosyl-(1-&gt;3)-1D-myo-inositol + UDP + H(+). Functionally, galactinol synthase involved in the biosynthesis of raffinose family oligosaccharides (RFOs) that function as osmoprotectants. May promote plant stress tolerance. This is Galactinol synthase 3 (GOLS3) from Arabidopsis thaliana (Mouse-ear cress).